The chain runs to 156 residues: Small ribosomal subunit protein uS7 (156 aa).

The protein belongs to the universal ribosomal protein uS7 family. In terms of assembly, part of the 30S ribosomal subunit. Contacts proteins S9 and S11.

Its function is as follows. One of the primary rRNA binding proteins, it binds directly to 16S rRNA where it nucleates assembly of the head domain of the 30S subunit. Is located at the subunit interface close to the decoding center, probably blocks exit of the E-site tRNA. This chain is Small ribosomal subunit protein uS7, found in Streptococcus pyogenes serotype M1.